Reading from the N-terminus, the 110-residue chain is Protein NATD1 (110 aa).

One can recognise an N-acetyltransferase domain in the interval 19-109; sequence EHDKKRRQFS…PHPQYLERIL (91 aa).

It belongs to the NATD1 family.

This is Protein NATD1 (natd1) from Danio rerio (Zebrafish).